A 355-amino-acid chain; its full sequence is Protein RecA (355 aa).

An ATP-binding site is contributed by 65-72; sequence GPESSGKT. Residues 333 to 355 are disordered; sequence IEEKDEKQAEAEKNENTNLFDEE. The segment covering 336–347 has biased composition (basic and acidic residues); the sequence is KDEKQAEAEKNE.

The protein belongs to the RecA family.

The protein resides in the cytoplasm. Can catalyze the hydrolysis of ATP in the presence of single-stranded DNA, the ATP-dependent uptake of single-stranded DNA by duplex DNA, and the ATP-dependent hybridization of homologous single-stranded DNAs. It interacts with LexA causing its activation and leading to its autocatalytic cleavage. The sequence is that of Protein RecA from Staphylococcus carnosus (strain TM300).